The following is a 647-amino-acid chain: Threonine--tRNA ligase (647 aa).

One can recognise a TGS domain in the interval 1–61 (MIKITFPDGA…EEDGSIEIVT (61 aa)). The interval 240–538 (DHRKLGKELD…LIETYKGAFP (299 aa)) is catalytic. Zn(2+) contacts are provided by C334, H385, and H515.

This sequence belongs to the class-II aminoacyl-tRNA synthetase family. As to quaternary structure, homodimer. Zn(2+) is required as a cofactor.

It localises to the cytoplasm. It carries out the reaction tRNA(Thr) + L-threonine + ATP = L-threonyl-tRNA(Thr) + AMP + diphosphate + H(+). In terms of biological role, catalyzes the attachment of threonine to tRNA(Thr) in a two-step reaction: L-threonine is first activated by ATP to form Thr-AMP and then transferred to the acceptor end of tRNA(Thr). Also edits incorrectly charged L-seryl-tRNA(Thr). The polypeptide is Threonine--tRNA ligase (Streptococcus agalactiae serotype V (strain ATCC BAA-611 / 2603 V/R)).